A 1002-amino-acid chain; its full sequence is Chitin synthase II (1002 aa).

Disordered stretches follow at residues 1-165 (MDRP…GRTS) and 178-209 (LDGSDDVFGPETDLSDSRPLPTHRDSFMSGSQ). The span at 63–78 (SYQPSVVSSHSRSASV) shows a compositional bias: low complexity. Asn123 carries an N-linked (GlcNAc...) asparagine glycan. N-linked (GlcNAc...) asparagine glycosylation is present at Asn336. Helical transmembrane passes span 627 to 647 (WLNGAFFAAVYSLVQFRQILA), 669 to 689 (LLFTYFSLANFYLTFYFVAGG), 704 to 724 (SVIFTILRYTCVLLIATQFIL), 740 to 760 (SMIIYGVIMTYTSFACIYIVV), 780 to 800 (LIVSMASTIGLYFVMSFLYLE), 808 to 828 (SLQYFLLLPSYICTLQVYAFC), 906 to 926 (YMVVTWMIANGILAMAVSEIY), and 940 to 960 (ILWAVASLAIFRALGSTTFAI).

It belongs to the chitin synthase family. Class II subfamily. In terms of tissue distribution, expressed in hyphal bodies.

It localises to the cell membrane. It carries out the reaction [(1-&gt;4)-N-acetyl-beta-D-glucosaminyl](n) + UDP-N-acetyl-alpha-D-glucosamine = [(1-&gt;4)-N-acetyl-beta-D-glucosaminyl](n+1) + UDP + H(+). In terms of biological role, polymerizes chitin, a structural polymer of the cell wall and septum, by transferring the sugar moiety of UDP-GlcNAc to the non-reducing end of the growing chitin polymer. Contributes to the production of conidia and the ability of fungal conidia to germinate. Involved in fungal stress tolerances. The chain is Chitin synthase II from Metarhizium acridum (strain CQMa 102).